The primary structure comprises 508 residues: DNA-directed RNA polymerase subunit Rpo1C (508 aa).

Residues 1-123 are unknown; the sequence is MIIWKDTAKN…REKYEYEKKV (123 aa). Residues 124–508 are DNA-directed RNA polymerase subunit Rpo1C; sequence SSQVLDVIAE…IYKGYPKTKK (385 aa).

This sequence belongs to the RNA polymerase beta' chain family. In terms of assembly, part of the RNA polymerase complex.

Its subcellular location is the cytoplasm. The enzyme catalyses RNA(n) + a ribonucleoside 5'-triphosphate = RNA(n+1) + diphosphate. DNA-dependent RNA polymerase (RNAP) catalyzes the transcription of DNA into RNA using the four ribonucleoside triphosphates as substrates. Forms part of the jaw domain. The polypeptide is DNA-directed RNA polymerase subunit Rpo1C (Thermoplasma volcanium (strain ATCC 51530 / DSM 4299 / JCM 9571 / NBRC 15438 / GSS1)).